A 537-amino-acid polypeptide reads, in one-letter code: Proline--tRNA ligase (537 aa).

Belongs to the class-II aminoacyl-tRNA synthetase family. ProS type 3 subfamily. In terms of assembly, homodimer.

It is found in the cytoplasm. The enzyme catalyses tRNA(Pro) + L-proline + ATP = L-prolyl-tRNA(Pro) + AMP + diphosphate. Its function is as follows. Catalyzes the attachment of proline to tRNA(Pro) in a two-step reaction: proline is first activated by ATP to form Pro-AMP and then transferred to the acceptor end of tRNA(Pro). In Nanoarchaeum equitans (strain Kin4-M), this protein is Proline--tRNA ligase.